Consider the following 251-residue polypeptide: Hydroxyacylglutathione hydrolase (251 aa).

Positions 53, 55, 57, 58, 110, 127, and 165 each coordinate Zn(2+).

The protein belongs to the metallo-beta-lactamase superfamily. Glyoxalase II family. As to quaternary structure, monomer. Requires Zn(2+) as cofactor.

It catalyses the reaction an S-(2-hydroxyacyl)glutathione + H2O = a 2-hydroxy carboxylate + glutathione + H(+). It participates in secondary metabolite metabolism; methylglyoxal degradation; (R)-lactate from methylglyoxal: step 2/2. Functionally, thiolesterase that catalyzes the hydrolysis of S-D-lactoyl-glutathione to form glutathione and D-lactic acid. In Escherichia coli O6:H1 (strain CFT073 / ATCC 700928 / UPEC), this protein is Hydroxyacylglutathione hydrolase.